Consider the following 325-residue polypeptide: Anthranilate phosphoribosyltransferase (325 aa).

5-phospho-alpha-D-ribose 1-diphosphate-binding positions include glycine 73, glycine 76–aspartate 77, threonine 81, asparagine 83–threonine 86, lysine 100–serine 108, and serine 112. Glycine 73 provides a ligand contact to anthranilate. Serine 85 provides a ligand contact to Mg(2+). Residue asparagine 103 participates in anthranilate binding. Arginine 158 contacts anthranilate. Mg(2+)-binding residues include aspartate 216 and glutamate 217.

It belongs to the anthranilate phosphoribosyltransferase family. In terms of assembly, homodimer. Mg(2+) serves as cofactor.

It carries out the reaction N-(5-phospho-beta-D-ribosyl)anthranilate + diphosphate = 5-phospho-alpha-D-ribose 1-diphosphate + anthranilate. The protein operates within amino-acid biosynthesis; L-tryptophan biosynthesis; L-tryptophan from chorismate: step 2/5. Its function is as follows. Catalyzes the transfer of the phosphoribosyl group of 5-phosphorylribose-1-pyrophosphate (PRPP) to anthranilate to yield N-(5'-phosphoribosyl)-anthranilate (PRA). In Methanococcus aeolicus (strain ATCC BAA-1280 / DSM 17508 / OCM 812 / Nankai-3), this protein is Anthranilate phosphoribosyltransferase.